A 337-amino-acid chain; its full sequence is Fructose-1,6-bisphosphatase class 1 (337 aa).

Residues E90, D112, L114, and D115 each contribute to the Mg(2+) site. Substrate is bound by residues 115-118, N211, and K277; that span reads DGSS. E283 is a binding site for Mg(2+).

It belongs to the FBPase class 1 family. Homotetramer. Mg(2+) is required as a cofactor.

The protein localises to the cytoplasm. The enzyme catalyses beta-D-fructose 1,6-bisphosphate + H2O = beta-D-fructose 6-phosphate + phosphate. The protein operates within carbohydrate biosynthesis; gluconeogenesis. This Azotobacter vinelandii (strain DJ / ATCC BAA-1303) protein is Fructose-1,6-bisphosphatase class 1.